The primary structure comprises 347 residues: NADH-ubiquinone oxidoreductase chain 2 (347 aa).

11 helical membrane-spanning segments follow: residues 1-21 (MNPL…IITM), 25-45 (HWLT…PLIM), 59-79 (YFLI…INFM), 96-116 (TIIL…FWVP), 123-143 (LLST…SILY), 153-173 (IILA…LNQT), 178-198 (IMAY…IYNP), 200-220 (LMLL…TILI), 239-259 (ILMM…PLSG), 278-298 (ISLT…RLIY), and 325-345 (FLPT…MMFI).

The protein belongs to the complex I subunit 2 family. In terms of assembly, core subunit of respiratory chain NADH dehydrogenase (Complex I) which is composed of 45 different subunits. Interacts with TMEM242.

The protein localises to the mitochondrion inner membrane. It carries out the reaction a ubiquinone + NADH + 5 H(+)(in) = a ubiquinol + NAD(+) + 4 H(+)(out). Functionally, core subunit of the mitochondrial membrane respiratory chain NADH dehydrogenase (Complex I) that is believed to belong to the minimal assembly required for catalysis. Complex I functions in the transfer of electrons from NADH to the respiratory chain. The immediate electron acceptor for the enzyme is believed to be ubiquinone. This is NADH-ubiquinone oxidoreductase chain 2 from Oryzorictes hova (Hova rice tenrec).